Consider the following 71-residue polypeptide: Serine palmitoyltransferase small subunit A (71 aa).

Residues 1–12 (MAGMALARAWKQ) lie on the Cytoplasmic side of the membrane. Residues 13–29 (MSWFYYQYLLVTALYML) form a helical membrane-spanning segment. Residues 30–34 (EPWER) are Lumenal-facing. The chain crosses the membrane as a helical span at residues 35–57 (TVFNSMLVSVVGMALYTGYVFMP). The Cytoplasmic portion of the chain corresponds to 58–71 (QHIMAILHYFEIVQ).

The protein belongs to the SPTSS family. SPTSSA subfamily. In terms of assembly, component of the serine palmitoyltransferase (SPT) complex, which is composed of SPTLC1, SPTLC2 or SPTLC3 and SPTSSA or SPTSSB. The heterodimer consisting of SPTLC1 and SPTLC2/SPTLC3 forms the catalytic core of the enzyme, while SPTSSA or SPTSSB subunits determine substrate specificity. SPT also interacts with ORMDL proteins, especially ORMDL3, which negatively regulate SPT activity in the presence of ceramides. Interacts with MBOAT7; the interaction plays a role in MBOAT7 localization to mitochondria-associated membranes.

The protein localises to the endoplasmic reticulum membrane. Its pathway is lipid metabolism; sphingolipid metabolism. Component of the serine palmitoyltransferase multisubunit enzyme (SPT) that catalyzes the initial and rate-limiting step in sphingolipid biosynthesis by condensing L-serine and activated acyl-CoA (most commonly palmitoyl-CoA) to form long-chain bases. The SPT complex is composed of SPTLC1, SPTLC2 or SPTLC3 and SPTSSA or SPTSSB. Within this complex, the heterodimer consisting of SPTLC1 and SPTLC2/SPTLC3 forms the catalytic core. Within the SPT complex, SPTSSA stimulates the catalytic activity and plays a role in substrate specificity, which depends upon the overall complex composition. The SPTLC1-SPTLC2-SPTSSA complex shows a strong preference for C16-CoA substrate, while the SPTLC1-SPTLC3-SPTSSA isozyme uses both C14-CoA and C16-CoA as substrates, with a slight preference for C14-CoA. Independently of its action as a SPT component, may be involved in MBOAT7 localization to mitochondria-associated membranes, a membrane bridge between the endoplasmic reticulum and mitochondria, may hence affect MBOAT7-catalyzed incorporation of arachidonic acid into phosphatidylinositol. The sequence is that of Serine palmitoyltransferase small subunit A from Mus musculus (Mouse).